A 432-amino-acid chain; its full sequence is PC-esterase domain-containing protein 1B (432 aa).

2 disordered regions span residues W273 to L312 and G407 to Q432. A compositionally biased stretch (polar residues) spans Q285 to Q294. Residues P296–L312 are compositionally biased toward pro residues.

It belongs to the PC-esterase family.

The polypeptide is PC-esterase domain-containing protein 1B (Pced1b) (Rattus norvegicus (Rat)).